A 318-amino-acid chain; its full sequence is Replication factor C small subunit (318 aa).

43–50 contributes to the ATP binding site; the sequence is GSVGTGKT.

It belongs to the activator 1 small subunits family. RfcS subfamily. Heteromultimer composed of small subunits (RfcS) and large subunits (RfcL).

Part of the RFC clamp loader complex which loads the PCNA sliding clamp onto DNA. The chain is Replication factor C small subunit from Thermoplasma acidophilum (strain ATCC 25905 / DSM 1728 / JCM 9062 / NBRC 15155 / AMRC-C165).